Reading from the N-terminus, the 274-residue chain is ATP synthase subunit a (274 aa).

5 helical membrane passes run Thr43–Phe63, Val103–Leu123, Val144–Ile164, Leu223–Pro243, and Ala245–Val265.

It belongs to the ATPase A chain family. In terms of assembly, F-type ATPases have 2 components, CF(1) - the catalytic core - and CF(0) - the membrane proton channel. CF(1) has five subunits: alpha(3), beta(3), gamma(1), delta(1), epsilon(1). CF(0) has three main subunits: a(1), b(2) and c(9-12). The alpha and beta chains form an alternating ring which encloses part of the gamma chain. CF(1) is attached to CF(0) by a central stalk formed by the gamma and epsilon chains, while a peripheral stalk is formed by the delta and b chains.

The protein localises to the cell inner membrane. Functionally, key component of the proton channel; it plays a direct role in the translocation of protons across the membrane. This is ATP synthase subunit a from Photorhabdus laumondii subsp. laumondii (strain DSM 15139 / CIP 105565 / TT01) (Photorhabdus luminescens subsp. laumondii).